The primary structure comprises 351 residues: Nuclear inhibitor of protein phosphatase 1 (351 aa).

Residues 1-142 (MAAAVNSGSS…LPSAVKGDEK (142 aa)) are interaction with CDC5L, SF3B1 and MELK. In terms of domain architecture, FHA spans 49–101 (YLFGRNPDLCDFTIDHQSCSRVHAALVYHKHLKRVFLIDLNSTHGTFLGHIRL). The tract at residues 143-224 (MGGEDDELKG…VDPSVGRFRN (82 aa)) is interaction with EED. Phosphothreonine is present on Thr-161. 2 positions are modified to phosphoserine: Ser-178 and Ser-199. Short sequence motifs (nuclear localization signal) lie at residues 185-209 (GNLD…DDEI) and 210-240 (INPE…RMEG). The tract at residues 191 to 200 (RPKRKRKNSR) is involved in PP-1 inhibition. An involved in PP-1 binding region spans residues 200-203 (RVTF). Ser-204 bears the Phosphoserine mark. At Ser-249 the chain carries Phosphoserine. Residue Tyr-264 is modified to Phosphotyrosine. Positions 310 to 329 (AVAINPTPNPAVYNPEAVNE) are interaction with EED. The tract at residues 314–351 (NPTPNPAVYNPEAVNEPKKKKYAKEAWPGKKPTPSLLI) is disordered. Residues 330–351 (PKKKKYAKEAWPGKKPTPSLLI) form an RNA-binding region. The tract at residues 331–337 (KKKKYAK) is involved in PP-1 inhibition. The residue at position 335 (Tyr-335) is a Phosphotyrosine.

As to quaternary structure, interacts with phosphorylated CDC5L, SF3B1 and MELK. Part of the spliceosome. Interacts with PPP1CA, PPP1CB and PPP1CC. Interacts with EED. Part of a complex consisting of PPP1R8, EED, HDAC2 and PP-1. May be inactivated by phosphorylation on Ser-199 or Ser-204.

The protein resides in the nucleus. Its subcellular location is the nucleus speckle. Inhibitor subunit of the major nuclear protein phosphatase-1 (PP-1). It has RNA-binding activity but does not cleave RNA and may target PP-1 to RNA-associated substrates. May also be involved in pre-mRNA splicing. Binds DNA and might act as a transcriptional repressor. Essential for cell proliferation and early embryonic development. The protein is Nuclear inhibitor of protein phosphatase 1 (Ppp1r8) of Mus musculus (Mouse).